The following is a 179-amino-acid chain: Shikimate kinase (179 aa).

11 to 16 (GAGKTT) contacts ATP. T15 contributes to the Mg(2+) binding site. Substrate-binding residues include D33, R57, and G79. R118 provides a ligand contact to ATP. R140 serves as a coordination point for substrate.

The protein belongs to the shikimate kinase family. Monomer. Mg(2+) is required as a cofactor.

Its subcellular location is the cytoplasm. It catalyses the reaction shikimate + ATP = 3-phosphoshikimate + ADP + H(+). It functions in the pathway metabolic intermediate biosynthesis; chorismate biosynthesis; chorismate from D-erythrose 4-phosphate and phosphoenolpyruvate: step 5/7. Functionally, catalyzes the specific phosphorylation of the 3-hydroxyl group of shikimic acid using ATP as a cosubstrate. This is Shikimate kinase from Bacteroides fragilis (strain ATCC 25285 / DSM 2151 / CCUG 4856 / JCM 11019 / LMG 10263 / NCTC 9343 / Onslow / VPI 2553 / EN-2).